A 306-amino-acid chain; its full sequence is uncharacterized protein (306 aa).

N-linked (GlcNAc...) asparagine glycosylation is present at Asn-208. The next 2 membrane-spanning stretches (helical) occupy residues Val-218–Tyr-238 and Val-284–Lys-304.

The protein localises to the membrane. This is an uncharacterized protein from Encephalitozoon cuniculi (strain GB-M1) (Microsporidian parasite).